The chain runs to 230 residues: Protein-L-isoaspartate O-methyltransferase (230 aa).

The active site involves S65.

It belongs to the methyltransferase superfamily. L-isoaspartyl/D-aspartyl protein methyltransferase family. Monomer. In terms of tissue distribution, highest contents in seeds.

It localises to the cytoplasm. It catalyses the reaction [protein]-L-isoaspartate + S-adenosyl-L-methionine = [protein]-L-isoaspartate alpha-methyl ester + S-adenosyl-L-homocysteine. In terms of biological role, catalyzes the methyl esterification of L-isoaspartyl residues in peptides and proteins that result from spontaneous decomposition of normal L-aspartyl and L-asparaginyl residues. It plays a role in the repair and/or degradation of damaged proteins. This enzyme does not act on D-aspartyl residues. The polypeptide is Protein-L-isoaspartate O-methyltransferase (PCM) (Triticum aestivum (Wheat)).